The chain runs to 77 residues: DNA-directed RNA polymerase subunit epsilon (77 aa).

It belongs to the RNA polymerase subunit epsilon family. RNAP is composed of a core of 2 alpha, a beta and a beta' subunit. The core is associated with a delta subunit, and at least one of epsilon or omega. When a sigma factor is associated with the core the holoenzyme is formed, which can initiate transcription.

It catalyses the reaction RNA(n) + a ribonucleoside 5'-triphosphate = RNA(n+1) + diphosphate. Functionally, a non-essential component of RNA polymerase (RNAP). The polypeptide is DNA-directed RNA polymerase subunit epsilon (Streptococcus pneumoniae (strain Hungary19A-6)).